The primary structure comprises 698 residues: Superoxide-generating NADPH oxidase heavy chain subunit B (698 aa).

Disordered regions lie at residues 1 to 68 and 134 to 158; these read MNEK…NITP and NDQVNSNTDNNNNTNNNNNTNNNKN. The Cytoplasmic portion of the chain corresponds to 1 to 184; sequence MNEKKELQQE…KIRGWWWHRG (184 aa). Polar residues-rich tracts occupy residues 16–25 and 33–53; these read FQTPKNQQLE and EISSTGNETSESGISSPPISQ. Low complexity-rich tracts occupy residues 54-65 and 138-156; these read NDNSNNENESLN and NSNTDNNNNTNNNNNTNNN. Residues 185-205 form a helical membrane-spanning segment; it reads ISTYIMLFYIALNIGVGVHMF. The Extracellular portion of the chain corresponds to 206–229; the sequence is YNMYHSDIFKFLGLSFCFSRTAAR. In terms of domain architecture, Ferric oxidoreductase spans 225-375; sequence RTAARLINLN…LFIPFYILLC (151 aa). The chain crosses the membrane as a helical span at residues 230–250; the sequence is LINLNSAVILLPVLRNFLSWL. The Cytoplasmic portion of the chain corresponds to 251 to 269; it reads RGTIVNNYIPIDKHLNFHK. Residues histidine 268 and histidine 282 each coordinate heme. The helical transmembrane segment at 270–290 threads the bilayer; the sequence is LCAFMLFCCTIIHCVGHYISF. The Extracellular segment spans residues 291–324; it reads KKINDDVLKIDDGKSVAGDYLNININNFPDEKYL. The chain crosses the membrane as a helical span at residues 325 to 345; sequence FFKSVPGITGHIMLLILILIV. Residues 346 to 355 lie on the Cytoplasmic side of the membrane; the sequence is SSSMWRIRRP. Residues 356 to 376 traverse the membrane as a helical segment; it reads MFEIFWYVHHLFIPFYILLCF. Histidine 364 and histidine 377 together coordinate heme. Topologically, residues 377-388 are extracellular; the sequence is HGYSKILKKDPQ. Residues 389–409 form a helical membrane-spanning segment; that stretch reads SWMWIIAPFILYSIERLIRIA. The FAD-binding FR-type domain maps to 404 to 528; sequence RLIRIARSKK…DGPFGAPAEN (125 aa). The Cytoplasmic portion of the chain corresponds to 410 to 698; the sequence is RSKKRVILEK…CHLIFHKENF (289 aa). 460 to 466 is a binding site for FAD; the sequence is HPFTITS.

As to quaternary structure, composed of a heavy chain and a light chain. FAD is required as a cofactor.

The protein localises to the membrane. In terms of biological role, critical component of the membrane-bound oxidase that generates superoxide. It is the terminal component of a respiratory chain that transfers single electrons from cytoplasmic NADPH across the plasma membrane to molecular oxygen on the exterior. The chain is Superoxide-generating NADPH oxidase heavy chain subunit B (noxB) from Dictyostelium discoideum (Social amoeba).